The sequence spans 283 residues: NFU1 iron-sulfur cluster scaffold homolog, mitochondrial (283 aa).

The transit peptide at 1–65 (MSKFLSQAAI…ELRMPVACRR (65 aa)) directs the protein to the mitochondrion. Residues 182 to 250 (IKELLDTRIR…IPEVESVEQV (69 aa)) form a nifU region. Residues C219 and C222 each coordinate [4Fe-4S] cluster.

This sequence belongs to the NifU family.

The protein resides in the mitochondrion. Functionally, molecular scaffold for [Fe-S] cluster assembly of mitochondrial iron-sulfur proteins. This is NFU1 iron-sulfur cluster scaffold homolog, mitochondrial from Drosophila sechellia (Fruit fly).